The following is a 230-amino-acid chain: MKEERPIIALDFSSFEETKAFLDLFPAEEKLYVKIGMELYYAQGPDIVRYIKSLGHNVFLDLKLHDIPNTVRAAMAVLKELDIDMATVHAAGGVEMLKAAREGLGQDPTLIAVTQLTSTSEDQMRGDQNIQTSLLESVLHYSKGAAKAQLDGVVCSAQEVEAIKAVTPTGFTCLTPGIRPKGSNIGDQKRVMTPNQARRIESDYIVVGRPITQAKDPVAAYQAIKAEWAG.

Substrate contacts are provided by residues aspartate 11, lysine 34, 61–70 (DLKLHDIPNT), threonine 117, arginine 179, glutamine 188, glycine 208, and arginine 209. Residue lysine 63 is the Proton donor of the active site.

This sequence belongs to the OMP decarboxylase family. Type 1 subfamily. Homodimer.

The enzyme catalyses orotidine 5'-phosphate + H(+) = UMP + CO2. It participates in pyrimidine metabolism; UMP biosynthesis via de novo pathway; UMP from orotate: step 2/2. Catalyzes the decarboxylation of orotidine 5'-monophosphate (OMP) to uridine 5'-monophosphate (UMP). This Streptococcus pyogenes serotype M18 (strain MGAS8232) protein is Orotidine 5'-phosphate decarboxylase.